Here is a 149-residue protein sequence, read N- to C-terminus: Protein OPG200 (149 aa).

The protein belongs to the orthopoxvirus OPG200 family. As to quaternary structure, homodimers. Interacts with host IKBKB; this interaction inhibits host NF-kappa-B activation.

In terms of biological role, contributes to virulence by binding to the host IKBKB subunit of the IKK complex and preventing host NF-kappa-B activation in response to pro-inflammatory stimuli such as TNF-alpha or IL1B. Mechanistically, sterically hinders the direct contact between the kinase domains of IKBKB in the IKK complex containing IKBKB, CHUK/IKKA and NEMO. The polypeptide is Protein OPG200 (OPG200) (Vaccinia virus (strain Western Reserve) (VACV)).